The sequence spans 605 residues: Capsid scaffolding protein (605 aa).

Residues histidine 48, serine 116, and histidine 139 each act as charge relay system in the active site. Residues alanine 235–glycine 274 are disordered. An interaction with pAP region spans residues glutamine 281 to aspartate 300. Disordered regions lie at residues aspartate 403 to glutamate 431 and proline 489 to serine 588. The short motif at arginine 410 to arginine 416 is the Nuclear localization signal element. Over residues alanine 568–proline 579 the composition is skewed to polar residues. An interaction with major capsid protein region spans residues lysine 585–alanine 605.

The protein belongs to the herpesviridae capsid scaffolding protein family. As to quaternary structure, homomultimer. Interacts with major capsid protein. Exists in a monomer-dimer equilibrium with the dimer being the active species. In terms of processing, capsid scaffolding protein is cleaved by assemblin after formation of the spherical procapsid. As a result, the capsid obtains its mature, icosahedral shape. Cleavages occur at two or more sites: release (R-site) and maturation (M-site).

It is found in the host cytoplasm. The protein localises to the host nucleus. It carries out the reaction Cleaves -Ala-|-Ser- and -Ala-|-Ala- bonds in the scaffold protein.. In terms of biological role, acts as a scaffold protein by binding major capsid protein in the cytoplasm, inducing the nuclear localization of both proteins. Multimerizes in the nucleus such as major capsid protein forms the icosahedral T=16 capsid. Autocatalytic cleavage releases the assembly protein, and subsequently abolishes interaction with major capsid protein. Cleavages products are evicted from the capsid before or during DNA packaging. Its function is as follows. Protease that plays an essential role in virion assembly within the nucleus. Catalyzes the cleavage of the assembly protein after formation of the spherical procapsid. By that cleavage, the capsid matures and gains its icosahedral shape. The cleavage sites seem to include -Ala-Ser-, -Ala-Ala-, as well as Ala-Thr bonds. Assemblin and cleavages products are evicted from the capsid before or during DNA packaging. Functionally, plays a major role in capsid assembly. Acts as a scaffold protein by binding major capsid protein. Multimerizes in the nucleus such as major capsid protein forms the icosahedral T=16 capsid. Cleaved by assemblin after capsid completion. The cleavages products are evicted from the capsid before or during DNA packaging. This chain is Capsid scaffolding protein, found in Homo sapiens (Human).